A 390-amino-acid polypeptide reads, in one-letter code: Cell division protein FtsZ (390 aa).

GTP is bound by residues 21–25 (GGGNN), 108–110 (GTG), E139, R143, and D187. The segment at 315–390 (FDDKPTSHGR…EERRSRRTRR (76 aa)) is disordered. Residues 326-360 (SGSTGFGTSVNTSSNATSKDESFTSNSSNAQATDS) show a composition bias toward polar residues. Positions 361–384 (VSERTHTTKEDDIPSFIRNREERR) are enriched in basic and acidic residues.

It belongs to the FtsZ family. As to quaternary structure, homodimer. Polymerizes to form a dynamic ring structure in a strictly GTP-dependent manner. Interacts directly with several other division proteins.

It is found in the cytoplasm. Functionally, essential cell division protein that forms a contractile ring structure (Z ring) at the future cell division site. The regulation of the ring assembly controls the timing and the location of cell division. One of the functions of the FtsZ ring is to recruit other cell division proteins to the septum to produce a new cell wall between the dividing cells. Binds GTP and shows GTPase activity. The sequence is that of Cell division protein FtsZ from Staphylococcus aureus (strain NCTC 8325 / PS 47).